We begin with the raw amino-acid sequence, 184 residues long: Guanylate kinase (184 aa).

Residues 5 to 183 (NGLIVITGPS…ALLEIKKLIK (179 aa)) form the Guanylate kinase-like domain. Residue 12–19 (GPSGVGKG) coordinates ATP.

It belongs to the guanylate kinase family.

It localises to the cytoplasm. It catalyses the reaction GMP + ATP = GDP + ADP. Functionally, essential for recycling GMP and indirectly, cGMP. The sequence is that of Guanylate kinase from Prochlorococcus marinus (strain SARG / CCMP1375 / SS120).